The chain runs to 144 residues: DNA polymerase III subunit chi (144 aa).

This sequence belongs to the DNA polymerase III chi/HolC chain family. In terms of assembly, DNA polymerase III contains a core (composed of alpha, epsilon and theta chains) that associates with a tau subunit. This core dimerizes to form the POLIII' complex. PolIII' associates with the gamma complex (composed of gamma, delta, delta', psi and chi chains) and with the beta chain to form the complete DNA polymerase III complex. Interacts directly with the psi subunit (holD). The only subunit of the DNA polymerase III holoenzyme known to interact with single-stranded DNA binding protein (SSB), interacts directly with DNA helicase YoaA.

It carries out the reaction DNA(n) + a 2'-deoxyribonucleoside 5'-triphosphate = DNA(n+1) + diphosphate. Its function is as follows. Part of the beta sliding clamp loading complex, which hydrolyzes ATP to load the beta clamp onto primed DNA to form the DNA replication pre-initiation complex. DNA polymerase III is a complex, multichain enzyme responsible for most of the replicative synthesis in bacteria. This DNA polymerase also exhibits 3' to 5' exonuclease activity. This subunit may stabilize YoaA and/or stimulate the helicase activity of YoaA. This Haemophilus influenzae (strain ATCC 51907 / DSM 11121 / KW20 / Rd) protein is DNA polymerase III subunit chi (holC).